We begin with the raw amino-acid sequence, 154 residues long: Putative nuclear shuttle protein (154 aa).

Belongs to the nanoviridae nuclear shuttle protein family.

Its subcellular location is the host nucleus. It is found in the host cytoplasm. In terms of biological role, putative nuclear shuttle protein. The sequence is that of Putative nuclear shuttle protein (DNA-N) from Musa (BBTV).